The sequence spans 439 residues: Methylenetetrahydrofolate--tRNA-(uracil-5-)-methyltransferase TrmFO (439 aa).

Gly-8 to Gly-13 lines the FAD pocket.

The protein belongs to the MnmG family. TrmFO subfamily. Requires FAD as cofactor.

The protein localises to the cytoplasm. It carries out the reaction uridine(54) in tRNA + (6R)-5,10-methylene-5,6,7,8-tetrahydrofolate + NADH + H(+) = 5-methyluridine(54) in tRNA + (6S)-5,6,7,8-tetrahydrofolate + NAD(+). It catalyses the reaction uridine(54) in tRNA + (6R)-5,10-methylene-5,6,7,8-tetrahydrofolate + NADPH + H(+) = 5-methyluridine(54) in tRNA + (6S)-5,6,7,8-tetrahydrofolate + NADP(+). Catalyzes the folate-dependent formation of 5-methyl-uridine at position 54 (M-5-U54) in all tRNAs. This chain is Methylenetetrahydrofolate--tRNA-(uracil-5-)-methyltransferase TrmFO, found in Magnetococcus marinus (strain ATCC BAA-1437 / JCM 17883 / MC-1).